We begin with the raw amino-acid sequence, 384 residues long: MAKHLFTSESVSEGHPDKVADQISDAVLDAILEQDPKARVACETYVKTGMVLVGGEVTTNAWVDIEEITRRTVREIGYVNSEMGFDANSCAVLSAIGKQSPDINQGVDRADPLEQGAGDQGLMFGYATNETSVLMPAPITYAHRLVERQAEVRKNGTLPWLRPDAKSQITFQYDDGKIVGIDAVVLSTQHSDDISLTDLQEAVMEEIIKPVLPAEWLSKETKYHINPTGRFVIGGPMGDCGLTGRKIIVDTYGGMARHGGGAFSGKDPSKVDRSAAYAARYVAKNIVAAGLADRCEIQVSYAIGVAEPTSIMVETFGTGKIAEDRLVALVREFFELRPYGLIQMLDLLHPIYRKTAAYGHFGREEFPWEKTDKAALLRDAAGLK.

His-15 serves as a coordination point for ATP. Residue Asp-17 coordinates Mg(2+). Glu-43 contacts K(+). Positions 56 and 99 each coordinate L-methionine. The flexible loop stretch occupies residues 99 to 109 (QSPDINQGVDR). ATP-binding positions include 164–166 (DAK), 230–231 (RF), Asp-239, 245–246 (RK), Ala-262, and Lys-266. Asp-239 provides a ligand contact to L-methionine. Lys-270 contacts L-methionine.

It belongs to the AdoMet synthase family. Homotetramer; dimer of dimers. Requires Mg(2+) as cofactor. K(+) is required as a cofactor.

It is found in the cytoplasm. It catalyses the reaction L-methionine + ATP + H2O = S-adenosyl-L-methionine + phosphate + diphosphate. It participates in amino-acid biosynthesis; S-adenosyl-L-methionine biosynthesis; S-adenosyl-L-methionine from L-methionine: step 1/1. Functionally, catalyzes the formation of S-adenosylmethionine (AdoMet) from methionine and ATP. The overall synthetic reaction is composed of two sequential steps, AdoMet formation and the subsequent tripolyphosphate hydrolysis which occurs prior to release of AdoMet from the enzyme. The protein is S-adenosylmethionine synthase of Yersinia enterocolitica serotype O:8 / biotype 1B (strain NCTC 13174 / 8081).